The following is a 381-amino-acid chain: Na(+)/H(+) antiporter NhaA 1 (381 aa).

The next 11 helical transmembrane spans lie at G18–A38, I53–L73, S89–L109, G118–G138, V147–F167, T170–L190, Y210–I230, P251–S271, F283–I303, I321–L341, and I348–F368.

The protein belongs to the NhaA Na(+)/H(+) (TC 2.A.33) antiporter family.

It is found in the cell inner membrane. The enzyme catalyses Na(+)(in) + 2 H(+)(out) = Na(+)(out) + 2 H(+)(in). Functionally, na(+)/H(+) antiporter that extrudes sodium in exchange for external protons. In Flavobacterium johnsoniae (strain ATCC 17061 / DSM 2064 / JCM 8514 / BCRC 14874 / CCUG 350202 / NBRC 14942 / NCIMB 11054 / UW101) (Cytophaga johnsonae), this protein is Na(+)/H(+) antiporter NhaA 1.